A 118-amino-acid polypeptide reads, in one-letter code: Aspartate 1-decarboxylase (118 aa).

Serine 25 serves as the catalytic Schiff-base intermediate with substrate; via pyruvic acid. Pyruvic acid (Ser) is present on serine 25. Threonine 57 lines the substrate pocket. The active-site Proton donor is tyrosine 58. 73–75 (GAA) provides a ligand contact to substrate.

The protein belongs to the PanD family. As to quaternary structure, heterooctamer of four alpha and four beta subunits. The cofactor is pyruvate. In terms of processing, is synthesized initially as an inactive proenzyme, which is activated by self-cleavage at a specific serine bond to produce a beta-subunit with a hydroxyl group at its C-terminus and an alpha-subunit with a pyruvoyl group at its N-terminus.

It is found in the cytoplasm. The catalysed reaction is L-aspartate + H(+) = beta-alanine + CO2. It functions in the pathway cofactor biosynthesis; (R)-pantothenate biosynthesis; beta-alanine from L-aspartate: step 1/1. Functionally, catalyzes the pyruvoyl-dependent decarboxylation of aspartate to produce beta-alanine. This chain is Aspartate 1-decarboxylase, found in Caulobacter vibrioides (strain ATCC 19089 / CIP 103742 / CB 15) (Caulobacter crescentus).